The following is a 183-amino-acid chain: Myelin-associated oligodendrocyte basic protein (183 aa).

The segment at 68 to 183 (TRTSRRAKSP…GSPVKASRFW (116 aa)) is disordered. The span at 69 to 78 (RTSRRAKSPQ) shows a compositional bias: basic residues. A compositionally biased stretch (low complexity) spans 79–96 (RPKQQPAAPPAVVRAPAK). Repeat copies occupy residues 97–106 (PRSPPRSERQ), 107–116 (PRSPPRSERQ), 117–126 (PRSPPRSERQ), and 127–136 (PRSPPRSERQ). The interval 97-136 (PRSPPRSERQPRSPPRSERQPRSPPRSERQPRSPPRSERQ) is 4 X 10 AA tandem repeats of P-R-S-P-P-R-S-E-R-Q. Residues S99 and S109 each carry the phosphoserine modification. Residues 101–143 (PRSERQPRSPPRSERQPRSPPRSERQPRSPPRSERQPRPRPEV) are compositionally biased toward basic and acidic residues. Positions 151–164 (RPPQKSKQQPRSSP) are enriched in low complexity.

It localises to the cytoplasm. The protein localises to the perinuclear region. Its function is as follows. May play a role in compacting or stabilizing the myelin sheath, possibly by binding the negatively charged acidic phospholipids of the cytoplasmic membrane. This chain is Myelin-associated oligodendrocyte basic protein (MOBP), found in Homo sapiens (Human).